We begin with the raw amino-acid sequence, 303 residues long: Cyclin-dependent kinase 4 (303 aa).

Alanine 2 is subject to N-acetylalanine. One can recognise a Protein kinase domain in the interval 6-295 (YEPVAEIGVG…AFRALQHSYL (290 aa)). Residues 12 to 20 (IGVGAYGTV) and lysine 35 contribute to the ATP site. Residues 50 to 56 (PVSTVRE) form a required for binding D-type cyclins region. The Proton acceptor role is filled by aspartate 140. A Phosphothreonine; by CAK modification is found at threonine 172. Residue serine 300 is modified to Phosphoserine.

Belongs to the protein kinase superfamily. CMGC Ser/Thr protein kinase family. CDC2/CDKX subfamily. As to quaternary structure, component of the D-CDK4 complex, composed of CDK4 and some D-type G1 cyclin (CCND1, CCND2 or CCND3). Interacts directly in the complex with CCND1, CCND2 or CCND3. Interacts with ZNF655. Forms a ternary complex, cyclin D-CDK4-CDKN1B, involved in modulating CDK4 enzymatic activity. Interacts directly with CDKN1B (phosphorylated on 'Tyr-88' and 'Tyr-89'); the interaction allows assembly of the cyclin D-CDK4 complex, Thr-172 phosphorylation, nuclear translocation and enhances the cyclin D-CDK4 complex activity. CDK4 activity is either inhibited or enhanced depending on stoichiometry of complex. The non-tyrosine-phosphorylated form of CDKN1B prevents T-loop phosphorylation of CDK4 producing inactive CDK4. Interacts (unphosphorylated form) with CDK2. Also forms ternary complexes with CDKN1A or CDKN2A. Interacts directly with CDKN1A (via its N-terminal); the interaction promotes the assembly of the cyclin D-CDK4 complex, its nuclear translocation and promotes the cyclin D-dependent enzyme activity of CDK4. Interacts with CCND1; the interaction is prevented with the binding of CCND1 to INSM1 during cell cycle progression. Interacts with SEI1 and CCND1. Probably forms a complex composed of chaperones HSP90 and HSP70, co-chaperones CDC37, PPP5C, TSC1 and client protein TSC2, CDK4, AKT, RAF1 and NR3C1; this complex does not contain co-chaperones STIP1/HOP and PTGES3/p23. Interacts with CEBPA (when phosphorylated). Interacts with FNIP1 and FNIP2. Post-translationally, phosphorylation at Thr-172 is required for enzymatic activity. Phosphorylated, in vitro, at this site by CCNH-CDK7, but, in vivo, appears to be phosphorylated by a proline-directed kinase. In the cyclin D-CDK4-CDKN1B complex, this phosphorylation and consequent CDK4 enzyme activity, is dependent on the tyrosine phosphorylation state of CDKN1B. Thus, in proliferating cells, CDK4 within the complex is phosphorylated on Thr-172 in the T-loop. In resting cells, phosphorylation on Thr-172 is prevented by the non-tyrosine-phosphorylated form of CDKN1B.

The protein resides in the cytoplasm. It is found in the nucleus. It localises to the nucleus membrane. It carries out the reaction L-seryl-[protein] + ATP = O-phospho-L-seryl-[protein] + ADP + H(+). It catalyses the reaction L-threonyl-[protein] + ATP = O-phospho-L-threonyl-[protein] + ADP + H(+). Both phosphorylation at Thr-172 and binding of a D-type cyclin are necessary for enzymatic activity. Full activation of the cyclin-D-CDK4 complex appears to require other factors such as recruitment of the substrate via a substrate recruitment motif, and/or formation of the CDKN1B ternary complex. Inhibited by INK4 family members. In resting cells, the non-tyrosine-phosphorylated form of CDKN1B prevents phosphorylation at Thr-172 and inactivation, while, in proliferating cells, tyrosine phosphorylation of CDKN1B allows phosphorylation of Thr-172 of CDK4 and subsequent activation. In terms of biological role, ser/Thr-kinase component of cyclin D-CDK4 (DC) complexes that phosphorylate and inhibit members of the retinoblastoma (RB) protein family including RB1 and regulate the cell-cycle during G(1)/S transition. Phosphorylation of RB1 allows dissociation of the transcription factor E2F from the RB/E2F complexes and the subsequent transcription of E2F target genes which are responsible for the progression through the G(1) phase. Hypophosphorylates RB1 in early G(1) phase. Cyclin D-CDK4 complexes are major integrators of various mitogenenic and antimitogenic signals. Also phosphorylates SMAD3 in a cell-cycle-dependent manner and represses its transcriptional activity. Component of the ternary complex, cyclin D/CDK4/CDKN1B, required for nuclear translocation and activity of the cyclin D-CDK4 complex. The sequence is that of Cyclin-dependent kinase 4 (Cdk4) from Mus musculus (Mouse).